The primary structure comprises 510 residues: DNA-directed RNA polymerase I subunit RPA34 (510 aa).

N-acetylmethionine is present on Met1. Residues 1 to 31 (MEEPQAGDAARFSCPPNFTAKPPASESPRFS) are disordered. Phosphoserine is present on Ser27. Position 80 is a phosphotyrosine (Tyr80). The disordered stretch occupies residues 120-143 (GPQQSLSGSPLQPIPASPPPQIPP). 4 positions are modified to phosphoserine: Ser128, Ser136, Ser172, and Ser205. Positions 131–143 (QPIPASPPPQIPP) are enriched in pro residues. The tract at residues 203–510 (LGSPEMDVRK…KRKQQQQQPV (308 aa)) is disordered. Residues 258–270 (GKETFEPEDKTVK) are compositionally biased toward basic and acidic residues. Residue Lys270 forms a Glycyl lysine isopeptide (Lys-Gly) (interchain with G-Cter in SUMO1); alternate linkage. Residue Lys270 forms a Glycyl lysine isopeptide (Lys-Gly) (interchain with G-Cter in SUMO2); alternate linkage. Position 285 is a phosphoserine (Ser285). Thr287 carries the post-translational modification Phosphothreonine. Ser309 carries the phosphoserine modification. Lys314 participates in a covalent cross-link: Glycyl lysine isopeptide (Lys-Gly) (interchain with G-Cter in SUMO1); alternate. Lys314 participates in a covalent cross-link: Glycyl lysine isopeptide (Lys-Gly) (interchain with G-Cter in SUMO2); alternate. Composition is skewed to low complexity over residues 372-382 (AKPQAQAALAA) and 394-407 (DATV…VGPE). The segment covering 421-430 (TKKKKKKKER) has biased composition (basic residues). Positions 436 to 452 (EPIQPLEPELPGEGQPE) are enriched in low complexity. Ser490 is subject to Phosphoserine.

The protein belongs to the eukaryotic RPA34 RNA polymerase subunit family. In terms of assembly, component of the RNA polymerase I (Pol I) complex consisting of 13 subunits: a ten-subunit catalytic core composed of POLR1A/RPA1, POLR1B/RPA2, POLR1C/RPAC1, POLR1D/RPAC2, POLR1H/RPA12, POLR2E/RPABC1, POLR2F/RPABC2, POLR2H/RPABC3, POLR2K/RPABC4 and POLR2L/RPABC5; a mobile stalk subunit POLR1F/RPA43 protruding from the core and additional subunits homologous to general transcription factors POLR1E/RPA49 and POLR1G/RPA34. Forms a heterodimer with POLR1E/RPA49. Part of Pol I pre-initiation complex (PIC), in which Pol I core assembles with RRN3 and promoter-bound UTBF and SL1/TIF-IB complex. Interacts with TAF1A thereby associates with the SL1/TIF-IB complex. Interacts with UBTF. Interacts with POLR1E/PRAF1 through its N-terminal region. Interacts with CD3E. Post-translationally, undergoes tyrosine phosphorylation upon T-cell receptor (TCR) stimulation. This phosphorylation has not been confirmed by other groups. In terms of processing, phosphorylated on tyrosine residues in initiation-competent Pol I-beta complexes but not in Pol I-alpha complexes.

The protein resides in the nucleus. The protein localises to the nucleolus. Its subcellular location is the chromosome. Component of RNA polymerase I (Pol I), a DNA-dependent RNA polymerase which synthesizes ribosomal RNA precursors using the four ribonucleoside triphosphates as substrates. Involved in UBTF-activated transcription, presumably at a step following PIC formation. Its function is as follows. Has been described as a component of preformed T-cell receptor (TCR) complex. This is DNA-directed RNA polymerase I subunit RPA34 from Homo sapiens (Human).